The following is a 268-amino-acid chain: 3-deoxy-manno-octulosonate cytidylyltransferase (268 aa).

It belongs to the KdsB family.

The protein localises to the cytoplasm. It carries out the reaction 3-deoxy-alpha-D-manno-oct-2-ulosonate + CTP = CMP-3-deoxy-beta-D-manno-octulosonate + diphosphate. It participates in nucleotide-sugar biosynthesis; CMP-3-deoxy-D-manno-octulosonate biosynthesis; CMP-3-deoxy-D-manno-octulosonate from 3-deoxy-D-manno-octulosonate and CTP: step 1/1. Its pathway is bacterial outer membrane biogenesis; lipopolysaccharide biosynthesis. Activates KDO (a required 8-carbon sugar) for incorporation into bacterial lipopolysaccharide in Gram-negative bacteria. The sequence is that of 3-deoxy-manno-octulosonate cytidylyltransferase from Ralstonia nicotianae (strain ATCC BAA-1114 / GMI1000) (Ralstonia solanacearum).